Reading from the N-terminus, the 564-residue chain is Arginine--tRNA ligase (564 aa).

The 'HIGH' region motif lies at 130-140 (ANPTGSLHIGH).

Belongs to the class-I aminoacyl-tRNA synthetase family. Monomer.

The protein localises to the cytoplasm. It carries out the reaction tRNA(Arg) + L-arginine + ATP = L-arginyl-tRNA(Arg) + AMP + diphosphate. In Malacoplasma penetrans (strain HF-2) (Mycoplasma penetrans), this protein is Arginine--tRNA ligase.